A 186-amino-acid polypeptide reads, in one-letter code: Ribosome-recycling factor (186 aa).

It belongs to the RRF family.

The protein resides in the cytoplasm. In terms of biological role, responsible for the release of ribosomes from messenger RNA at the termination of protein biosynthesis. May increase the efficiency of translation by recycling ribosomes from one round of translation to another. The chain is Ribosome-recycling factor from Maricaulis maris (strain MCS10) (Caulobacter maris).